The chain runs to 393 residues: MTEITNAIERTVEGTDLPKRLKDEVYESIEGRDVTDEQAVSIAEAVESRYLDTRVEPLDPVGTVSAQSIGEPGTQMTMNTFHYAGVAEIDVTQGLPRLIELVDARKTPDTPMMTVYLDDQHAENREKAHEVVWNIESTRILALGDVSTNVADMLVQVNLNEQTLDERMISAETVAEIIEDSLGVEVTQTGTTIEFGPAEPSYRRLLQLVEELREIVFKGIEEVSRVVIRKEDVDDGEEFILYTEGSAFGDVLDIEGVDASRTTCNNIHEVYRNLGVEAARETIIDETMNTLEEQGLGDVNIRHLMLVADIMTAEGTIESIGRHGISGNKNSVLARAAFEVTVNHLLDAAVHGEVDDLDGVTENVIVGKPIKLGTGDVNLRMGGATTDGSGRAD.

It belongs to the RNA polymerase beta' chain family. Part of the RNA polymerase complex.

It localises to the cytoplasm. It carries out the reaction RNA(n) + a ribonucleoside 5'-triphosphate = RNA(n+1) + diphosphate. Its function is as follows. DNA-dependent RNA polymerase (RNAP) catalyzes the transcription of DNA into RNA using the four ribonucleoside triphosphates as substrates. Forms part of the jaw domain. This Halococcus morrhuae (Micrococcus morrhuae) protein is DNA-directed RNA polymerase subunit Rpo1C.